A 214-amino-acid chain; its full sequence is MFSTKKSQGNLHKYIQRQSTDEFAVKAREHNYRARSAFKLIEINEKFKFLKPESTVIDIGCAPGSWLQVVVQKCPNGYASGVDLQNVLPIRGADILSLSDITDPAVKLKIREKLAHRQVDVVLSDMAPNPTGDNATDHLRLIELCRSVFRLFSVENEIELVKNGVYLCKIWDGSARAEFVRELSDRFSTVKTVKPTACRDNSAELYLFCRNFKK.

The N-terminal 18 residues, 1–18 (MFSTKKSQGNLHKYIQRQ), are a transit peptide targeting the mitochondrion. S-adenosyl-L-methionine is bound by residues 63-66 (PGSW), Asp-83, 100-101 (DI), and Asp-125. Lys-169 functions as the Proton acceptor in the catalytic mechanism.

Belongs to the class I-like SAM-binding methyltransferase superfamily. RNA methyltransferase RlmE family.

It is found in the mitochondrion. It catalyses the reaction a uridine in rRNA + S-adenosyl-L-methionine = a 2'-O-methyluridine in rRNA + S-adenosyl-L-homocysteine + H(+). In terms of biological role, S-adenosyl-L-methionine-dependent 2'-O-ribose methyltransferase that catalyzes the formation of 2'-O-methyluridine at position 808 (Um808) in the mitochondrial large subunit ribosomal RNA (mtLSU rRNA), a universally conserved modification in the peptidyl transferase domain of the mtLSU rRNA. This activity may require prior 2'-O-methylguanosine modification at position 809 (Gm809) by MRM3. Essential for late-stage assembly of mtLSU required for efficient translation of mitochondrial DNA encoded proteins; methyltransferase activity is not required for this function. Essential for mitochondrial respiratory function. The protein is rRNA methyltransferase 2, mitochondrial of Caenorhabditis elegans.